The sequence spans 329 residues: DNA-directed RNA polymerase subunit alpha (329 aa).

The tract at residues 1–234 (MQGSVTEFLK…EQLDAFVELR (234 aa)) is alpha N-terminal domain (alpha-NTD). The alpha C-terminal domain (alpha-CTD) stretch occupies residues 248-329 (FDPILLRPVD…WPPASLADDL (82 aa)).

This sequence belongs to the RNA polymerase alpha chain family. Homodimer. The RNAP catalytic core consists of 2 alpha, 1 beta, 1 beta' and 1 omega subunit. When a sigma factor is associated with the core the holoenzyme is formed, which can initiate transcription.

It catalyses the reaction RNA(n) + a ribonucleoside 5'-triphosphate = RNA(n+1) + diphosphate. Functionally, DNA-dependent RNA polymerase catalyzes the transcription of DNA into RNA using the four ribonucleoside triphosphates as substrates. This Shewanella loihica (strain ATCC BAA-1088 / PV-4) protein is DNA-directed RNA polymerase subunit alpha.